The chain runs to 541 residues: Chaperonin GroEL (541 aa).

Residues 29–32, 86–90, glycine 413, 478–480, and aspartate 494 each bind ATP; these read TIGP, DGTTT, and NAA.

This sequence belongs to the chaperonin (HSP60) family. Forms a cylinder of 14 subunits composed of two heptameric rings stacked back-to-back. Interacts with the co-chaperonin GroES.

It is found in the cytoplasm. The enzyme catalyses ATP + H2O + a folded polypeptide = ADP + phosphate + an unfolded polypeptide.. Together with its co-chaperonin GroES, plays an essential role in assisting protein folding. The GroEL-GroES system forms a nano-cage that allows encapsulation of the non-native substrate proteins and provides a physical environment optimized to promote and accelerate protein folding. This Oenococcus oeni (strain ATCC BAA-331 / PSU-1) protein is Chaperonin GroEL.